Consider the following 316-residue polypeptide: Transaldolase 2 (316 aa).

Lys131 acts as the Schiff-base intermediate with substrate in catalysis.

Belongs to the transaldolase family. Type 1 subfamily. Homodimer.

The protein resides in the cytoplasm. It catalyses the reaction D-sedoheptulose 7-phosphate + D-glyceraldehyde 3-phosphate = D-erythrose 4-phosphate + beta-D-fructose 6-phosphate. Its pathway is carbohydrate degradation; pentose phosphate pathway; D-glyceraldehyde 3-phosphate and beta-D-fructose 6-phosphate from D-ribose 5-phosphate and D-xylulose 5-phosphate (non-oxidative stage): step 2/3. In terms of biological role, transaldolase is important for the balance of metabolites in the pentose-phosphate pathway. The polypeptide is Transaldolase 2 (Salmonella choleraesuis (strain SC-B67)).